The chain runs to 76 residues: Small ribosomal subunit protein uS17 (76 aa).

It belongs to the universal ribosomal protein uS17 family. Part of the 30S ribosomal subunit.

In terms of biological role, one of the primary rRNA binding proteins, it binds specifically to the 5'-end of 16S ribosomal RNA. The protein is Small ribosomal subunit protein uS17 of Anaplasma phagocytophilum (strain HZ).